Here is a 239-residue protein sequence, read N- to C-terminus: Ribonuclease PH (239 aa).

Residues Arg-87 and Gly-125–Arg-127 contribute to the phosphate site.

This sequence belongs to the RNase PH family. Homohexameric ring arranged as a trimer of dimers.

It catalyses the reaction tRNA(n+1) + phosphate = tRNA(n) + a ribonucleoside 5'-diphosphate. Functionally, phosphorolytic 3'-5' exoribonuclease that plays an important role in tRNA 3'-end maturation. Removes nucleotide residues following the 3'-CCA terminus of tRNAs; can also add nucleotides to the ends of RNA molecules by using nucleoside diphosphates as substrates, but this may not be physiologically important. Probably plays a role in initiation of 16S rRNA degradation (leading to ribosome degradation) during starvation. In Pseudomonas aeruginosa (strain LESB58), this protein is Ribonuclease PH.